Reading from the N-terminus, the 1279-residue chain is Sterol regulatory element-binding protein cleavage-activating protein (1279 aa).

Residues 1 to 18 (MTLTERLREKISRAFYNH) lie on the Cytoplasmic side of the membrane. Residues 19 to 39 (GLLCASYPIPIILFTGFCILA) traverse the membrane as a helical segment. Residues 40-279 (CCYPLLKLPL…SLVHVHFKEE (240 aa)) lie on the Lumenal side of the membrane. A loop-1 region spans residues 46–284 (KLPLPGTGPV…HFKEEIGVAE (239 aa)). The disordered stretch occupies residues 60–80 (PVKDYSPPPVDSDRKQGEPTE). N-linked (GlcNAc...) asparagine glycosylation is present at Asn263. Residues 280 to 300 (IGVAELIPLVTTYIILFAYIY) form a helical membrane-spanning segment. The SSD domain occupies 284–442 (ELIPLVTTYI…MLFFTTVLSI (159 aa)). The Cytoplasmic portion of the chain corresponds to 301–312 (FSTRKIDMVKSK). The chain crosses the membrane as a helical span at residues 313–333 (WGLALAAVVTVLSSLLMSVGL). The Lumenal segment spans residues 334–344 (CTLFGLTPTLN). Residues 345-365 (GGEIFPYLVVVIGLENVLVLT) form a helical membrane-spanning segment. The Cytoplasmic portion of the chain corresponds to 366–401 (KSVVSTPVDLEVKLRIAQGLSSESWSIMKNMATELG). A helical transmembrane segment spans residues 402 to 422 (IILIGYFTLVPAIQEFCLFAV). Residue Val423 is a topological domain, lumenal. The helical transmembrane segment at 424–444 (GLVSDFFLQMLFFTTVLSIDI) threads the bilayer. At 445–518 (RRMELADLNK…FLARTRLAQR (74 aa)) the chain is on the cytoplasmic side. Positions 447 to 452 (MELADL) match the ER export signal motif. Residues Lys454 and Lys466 each participate in a glycyl lysine isopeptide (Lys-Gly) (interchain with G-Cter in ubiquitin) cross-link. Residues 519-539 (LIMAGTVVWIGILVYTDPAGL) traverse the membrane as a helical segment. The segment at 535–710 (DPAGLRNYLA…QAHGDVTLYK (176 aa)) is loop-7. Over 540–709 (RNYLAAQVTE…VQAHGDVTLY (170 aa)) the chain is Lumenal. Residues 579–615 (IFPPDAPKLPENQTSPGESPERGGPAEVVHDSPVPEV) are disordered. 2 N-linked (GlcNAc...) asparagine glycosylation sites follow: Asn590 and Asn641. The segment at 668 to 696 (EGRHPQDGRSAWPPPGPIPAGHWEAGPKG) is disordered. The helical transmembrane segment at 710 to 730 (KVAALGLATGIVLVLLLLCLY) threads the bilayer. Over 731–1279 (RVLCPRNYGQ…YVPSVLEKLD (549 aa)) the chain is Cytoplasmic. An interaction with SREBF2 region spans residues 731–1279 (RVLCPRNYGQ…YVPSVLEKLD (549 aa)). The stretch at 771-811 (VLRGHLMDIECLASDGMLLVSCCLAGHVCVWDAQTGDCLTR) is one WD 1 repeat. Positions 811 to 904 (RIPRPGRQRR…PRHRAVCGRS (94 aa)) are disordered. Ser822, Ser838, and Ser851 each carry phosphoserine. The span at 877-891 (IDTNFSAQPRSSQPT) shows a compositional bias: polar residues. 2 positions are modified to phosphoserine: Ser907 and Ser937. The disordered stretch occupies residues 931 to 962 (PALRPPSPGPVLSQAPEDEGGSPEKGSPSLAW). 2 WD repeats span residues 952–1002 (SPEK…LCCS) and 1005–1042 (EVSS…ALSP). Residue Arg1051 is modified to Omega-N-methylarginine. WD repeat units lie at residues 1077 to 1114 (AHQK…CLFT), 1117 to 1155 (GHSG…RVSH), 1158 to 1195 (AHRG…KFYS), and 1197 to 1235 (QQDL…LLQT).

Belongs to the WD repeat SCAP family. In terms of assembly, membrane region forms a homotetramer. Component of the SCAP-SREBP complex (composed of SCAP and SREBF1/SREBP1 or SREBF2/SREBP2); interacts with SREBF1/SREBP1 or SREBF2/SREBP2 through its C-terminal cytoplasmic domain. Forms a ternary complex with INSIG1 or INSIG2 through its transmembrane domains at high sterol concentrations. Interacts with PAQR3; the interaction anchors the SCAP-SREBP complex to the Golgi apparatus in low cholesterol conditions. Interacts with the SEC23-SEC24 complex in a SAR1-GTP-dependent manner through an ER export signal in its third cytoplasmic loop. Interacts with RNF139; the interaction inhibits the interaction of SCAP with SEC24B and hampering the ER to Golgi transport of the SCAP-SREBP complex. Interacts with SPRING1. In terms of processing, ubiquitinated at Lys-454 and Lys-466. RNF145 triggers ubiquitination of SCAP, likely inhibiting SCAP-SREBP complex transport to the Golgi apparatus and the subsequent processing/maturation of SREBF2/SREBP2.

The protein localises to the endoplasmic reticulum membrane. The protein resides in the golgi apparatus membrane. It is found in the cytoplasmic vesicle. Its subcellular location is the COPII-coated vesicle membrane. Its function is as follows. Escort protein required for cholesterol as well as lipid homeostasis. Regulates export of the SCAP-SREBP complex from the endoplasmic reticulum to the Golgi upon low cholesterol, thereby regulating the processing of sterol regulatory element-binding proteins (SREBPs) SREBF1/SREBP1 and SREBF2/SREBP2. At high sterol concentrations, formation of a ternary complex with INSIG (INSIG1 or INSIG2) leads to mask the ER export signal in SCAP, promoting retention of the complex in the endoplasmic reticulum. Low sterol concentrations trigger release of INSIG, a conformational change in the SSD domain of SCAP, unmasking of the ER export signal, promoting recruitment into COPII-coated vesicles and transport of the SCAP-SREBP to the Golgi: in the Golgi, SREBPs are then processed, releasing the transcription factor fragment of SREBPs from the membrane, its import into the nucleus and up-regulation of LDLR, INSIG1 and the mevalonate pathway. Binds cholesterol via its SSD domain. This chain is Sterol regulatory element-binding protein cleavage-activating protein, found in Homo sapiens (Human).